Reading from the N-terminus, the 175-residue chain is Large ribosomal subunit protein uL10 (175 aa).

This sequence belongs to the universal ribosomal protein uL10 family. Part of the ribosomal stalk of the 50S ribosomal subunit. The N-terminus interacts with L11 and the large rRNA to form the base of the stalk. The C-terminus forms an elongated spine to which L12 dimers bind in a sequential fashion forming a multimeric L10(L12)X complex.

Its function is as follows. Forms part of the ribosomal stalk, playing a central role in the interaction of the ribosome with GTP-bound translation factors. The polypeptide is Large ribosomal subunit protein uL10 (Mycobacterium sp. (strain KMS)).